We begin with the raw amino-acid sequence, 657 residues long: Methionine--tRNA ligase (657 aa).

The 'HIGH' region signature appears at 13-23 (YYPSGNLHIGH). The 'KMSKS' region signature appears at 308-312 (KMSKS). Residue K311 coordinates ATP. A tRNA-binding domain is found at 557 to 657 (DFDKVEIKAA…SAIPNGAVIK (101 aa)).

This sequence belongs to the class-I aminoacyl-tRNA synthetase family. MetG type 2B subfamily. As to quaternary structure, homodimer.

It localises to the cytoplasm. The enzyme catalyses tRNA(Met) + L-methionine + ATP = L-methionyl-tRNA(Met) + AMP + diphosphate. Its function is as follows. Is required not only for elongation of protein synthesis but also for the initiation of all mRNA translation through initiator tRNA(fMet) aminoacylation. In Staphylococcus aureus (strain Mu50 / ATCC 700699), this protein is Methionine--tRNA ligase.